The primary structure comprises 401 residues: Deoxyhypusine synthase-like protein (401 aa).

The protein belongs to the deoxyhypusine synthase family.

The polypeptide is Deoxyhypusine synthase-like protein (Thermosynechococcus vestitus (strain NIES-2133 / IAM M-273 / BP-1)).